Reading from the N-terminus, the 240-residue chain is Rho GDP-dissociation inhibitor 1 (240 aa).

Residues 1 to 66 are disordered; that stretch reads MSLVSGARDM…DDDSKLQLGP (66 aa).

Belongs to the Rho GDI family. In terms of assembly, interacts with RAC-like GTP binding proteins ARAC5/ROP4 and ARAC3/ROP6.

The protein resides in the cytoplasm. Its function is as follows. Regulates the GDP/GTP exchange reaction of the Rho proteins by inhibiting the dissociation of GDP from them, and the subsequent binding of GTP to them. This Arabidopsis thaliana (Mouse-ear cress) protein is Rho GDP-dissociation inhibitor 1 (GDI1).